Reading from the N-terminus, the 161-residue chain is MDYYQWRKKNRRRKRNLQTKKPLNYALKLLKYRVRFEDELRERLKKQGFADEEVESTINTLKKQGYLDDEKAAYLFALDEMRLKLFGPRVVRMKLKSLGVDEEIIERAIEKALEEIDFHEELKRLKGRFKDRWELRDYLYRRGFDPSLIEEILNKIDGGEE.

It belongs to the RecX family.

The protein localises to the cytoplasm. Functionally, modulates RecA activity. The protein is Regulatory protein RecX of Thermotoga petrophila (strain ATCC BAA-488 / DSM 13995 / JCM 10881 / RKU-1).